A 690-amino-acid chain; its full sequence is MLPRGRPRALGAALLLLLLLVVGFFLFGRDPEYGLGTTATLDGDPYGSRNRSTSSLQLLLPPKCEMLHVAIVCAGYNSSREIITLMKSVLFYRKNPLHLHLITDAVARNILETLFRTWMVPAVVVSFYDAEELKPLVSWIPNKHYSGLYGLMKLVLPSVLPLSLARVIVLDTDVTFSSDIMELWALFGHFSDKQVVGLVENQSDWYLGNLWKNHRPWPALGRGFNTGVILLWLDRLQQIGWEQMWKLTAKRELLTLTATSLADQDIFNAVIKEHPELVHPLPCVWNVQLSDHTLAERCYLEAADLKVIHWNSPKKLRVKNKHAEFFRDLHLTFLGFDGKLLCRELFGCPNQFPPGVEQLQQALAQLDEEEPCFEFRQQQLTVHRVHITFLSHQPPPPRPHDVTLVAQLSMDRLQMLEALCRHWRGPMSLALYLTDAEAQQFLRFVETSPVLSARKDVAYHVVYRDGPLYPVNQLRNVALAQALTPYVFLSDIDFLPAYSLYDYLRASIEQLALGRRQRKAALVVPAFETLHYRFSFPNSKAELLTLLDAGSLHTFRYHEWPQGHASTDYTRWREAQAPYRVQWSADYEPYVVVPRDCPRYDPRFVGFGWNKVAHIIELDAQEYEFLVLPEAFSIHLPHAPSLDISRFRSSPTYRDCLQALKEEFHQDLSRRYGSAALKYLTALQQSRSRA.

Topologically, residues M1 to P7 are cytoplasmic. A helical; Signal-anchor for type II membrane protein transmembrane segment spans residues R8–G28. Topologically, residues R29–A690 are lumenal. Residues N50 and N77 are each glycosylated (N-linked (GlcNAc...) asparagine). Residues L67 to C342 are xylosyltransferase activity. Residues D171 and D173 each contribute to the Mn(2+) site. N201 carries an N-linked (GlcNAc...) asparagine glycan. The glucuronyltransferase activity stretch occupies residues R343–S686. D491 and D493 together coordinate Mn(2+).

It in the C-terminal section; belongs to the glycosyltransferase 49 family. This sequence in the N-terminal section; belongs to the glycosyltransferase 8 family. Interacts with B4GAT1. Requires Mn(2+) as cofactor.

It localises to the golgi apparatus membrane. It carries out the reaction 3-O-[beta-D-GlcA-(1-&gt;3)-beta-D-Xyl-(1-&gt;4)-Rib-ol-P-Rib-ol-P-3-beta-D-GalNAc-(1-&gt;3)-beta-D-GlcNAc-(1-&gt;4)-(O-6-P-alpha-D-Man)]-Thr-[protein] + UDP-alpha-D-xylose = 3-O-[alpha-D-Xyl-(1-&gt;3)-beta-D-GlcA-(1-&gt;4)-beta-D-Xyl-(1-&gt;4)-Rib-ol-P-Rib-ol-P-3-beta-D-GalNAc-(1-&gt;3)-beta-D-GlcNAc-(1-&gt;4)-(O-6-P-alpha-D-Man)]-Thr-[protein] + UDP + H(+). It catalyses the reaction 3-O-{(1-&gt;[3)-alpha-D-Xyl-(1-&gt;3)-beta-D-GlcA-(1-&gt;](n)-4)-beta-D-Xyl-(1-&gt;4)-Rib-ol-P-Rib-ol-P-3-beta-D-GalNAc-(1-&gt;3)-beta-D-GlcNAc-(1-&gt;4)-O-6-P-alpha-D-Man}-L-Thr-[protein] + UDP-alpha-D-glucuronate = 3-O-{beta-D-GlcA-(1-&gt;[3)-alpha-D-Xyl-(1-&gt;3)-beta-D-GlcA-(1-&gt;](n)-4)-beta-D-Xyl-(1-&gt;4)-Rib-ol-P-Rib-ol-P-3-beta-D-GalNAc-(1-&gt;3)-beta-D-GlcNAc-(1-&gt;4)-O-6-P-alpha-D-Man}-L-Thr-[protein] + UDP + H(+). The catalysed reaction is 3-O-{beta-D-GlcA-(1-&gt;[3)-alpha-D-Xyl-(1-&gt;3)-beta-D-GlcA-(1-&gt;](n)-4)-beta-D-Xyl-(1-&gt;4)-Rib-ol-P-Rib-ol-P-3-beta-D-GalNAc-(1-&gt;3)-beta-D-GlcNAc-(1-&gt;4)-O-6-P-alpha-D-Man}-L-Thr-[protein] + UDP-alpha-D-xylose = 3-O-{(1-&gt;[3)-alpha-D-Xyl-(1-&gt;3)-beta-D-GlcA-(1-&gt;](n+1)-4)-beta-D-Xyl-(1-&gt;4)-Rib-ol-P-Rib-ol-P-3-beta-D-GalNAc-(1-&gt;3)-beta-D-GlcNAc-(1-&gt;4)-O-6-P-alpha-D-Man}-L-Thr-[protein] + UDP + H(+). The protein operates within protein modification; protein glycosylation. Functionally, bifunctional glycosyltransferase with both alpha-1,3-xylosyltransferase and beta-1,3-glucuronyltransferase activities involved in the maturation of alpha-dystroglycan (DAG1) by glycosylation leading to DAG1 binding to laminin G-like domain-containing extracellular proteins with high affinity and in a phosphorylated-O-mannosyl trisaccharide dependent manner. Elongates the glucuronyl-beta-1,4-xylose-beta disaccharide primer structure by adding repeating units [-3-Xylose-alpha-1,3-GlcA-beta-1-] to produce a heteropolysaccharide. Supports the maturation of DAG1 more effectively than LARGE1. In addition, can modify both heparan sulfate (HS)- and chondroitin/dermatan sulfate (CS/DS)-proteoglycans (PGs), namely GPC4, with a glycosaminoglycan (GAG)-like polysaccharide composed of xylose and glucuronic acid to confer laminin binding. In Rattus norvegicus (Rat), this protein is Xylosyl- and glucuronyltransferase LARGE2.